The following is a 567-amino-acid chain: Proline--tRNA ligase (567 aa).

This sequence belongs to the class-II aminoacyl-tRNA synthetase family. ProS type 1 subfamily. As to quaternary structure, homodimer.

It localises to the cytoplasm. The enzyme catalyses tRNA(Pro) + L-proline + ATP = L-prolyl-tRNA(Pro) + AMP + diphosphate. Functionally, catalyzes the attachment of proline to tRNA(Pro) in a two-step reaction: proline is first activated by ATP to form Pro-AMP and then transferred to the acceptor end of tRNA(Pro). As ProRS can inadvertently accommodate and process non-cognate amino acids such as alanine and cysteine, to avoid such errors it has two additional distinct editing activities against alanine. One activity is designated as 'pretransfer' editing and involves the tRNA(Pro)-independent hydrolysis of activated Ala-AMP. The other activity is designated 'posttransfer' editing and involves deacylation of mischarged Ala-tRNA(Pro). The misacylated Cys-tRNA(Pro) is not edited by ProRS. This chain is Proline--tRNA ligase, found in Geobacillus thermodenitrificans (strain NG80-2).